Reading from the N-terminus, the 151-residue chain is US8.5 protein (151 aa).

The disordered stretch occupies residues 27 to 107 (SSQPLDPEGP…APSPHPRPPG (81 aa)). Positions 80-91 (SDERGPPRHDRP) are enriched in basic and acidic residues.

The protein localises to the host nucleus. It is found in the host nucleolus. This is US8.5 protein (US8.5) from Human herpesvirus 1 (strain F) (HHV-1).